Here is a 228-residue protein sequence, read N- to C-terminus: Probable U3 small nucleolar RNA-associated protein 11 (228 aa).

Disordered stretches follow at residues 1–23 (MSSLRNAIPRPAHKERSQPEARK) and 192–211 (SMQKELQKKGRKRKLRDDEL). Residues 12–23 (AHKERSQPEARK) are compositionally biased toward basic and acidic residues.

The protein belongs to the UTP11 family. As to quaternary structure, component of the ribosomal small subunit (SSU) processome.

It is found in the nucleus. Its subcellular location is the nucleolus. Involved in nucleolar processing of pre-18S ribosomal RNA. The sequence is that of Probable U3 small nucleolar RNA-associated protein 11 from Arabidopsis thaliana (Mouse-ear cress).